The sequence spans 338 residues: MTNSVFQGRSFLAEKDFTRAELEYLIGLSAHLKDLKKRNIQHHYLAGKNIALLFEKTSTRTRAAFTTAAIDLGAHPEYLGANDIQLGKKESTEDTAKVLGRMFDGIEFRGFSQRMVEELAEFSGVPVWNGLTDEWHPTQMLADYLTVQENFGRLEGLTLVYCGDGRNNVANSLLVTGAILGVNVHIFSPKELFPEKEIVELAEGFAKESGAHVLITEDADEAVKDADVLYTDVWVSMGEEDKFAERVALLKPYQVNMDLVKKAGNENLIFLHCLPAFHDTHTVYGKDVAEKFGVEEMEVTDEVFRSKYARHFDQAENRMHTIKAVMAATLGNLYIPKV.

Residues 58–61, Q85, R109, and 136–139 each bind carbamoyl phosphate; these read STRT and HPTQ. L-ornithine-binding positions include N168, D232, and 236–237; that span reads SM. Carbamoyl phosphate contacts are provided by residues 273–274 and R318; that span reads CL.

It belongs to the aspartate/ornithine carbamoyltransferase superfamily. OTCase family.

The protein resides in the cytoplasm. It catalyses the reaction carbamoyl phosphate + L-ornithine = L-citrulline + phosphate + H(+). The protein operates within amino-acid degradation; L-arginine degradation via ADI pathway; carbamoyl phosphate from L-arginine: step 2/2. Its function is as follows. Reversibly catalyzes the transfer of the carbamoyl group from carbamoyl phosphate (CP) to the N(epsilon) atom of ornithine (ORN) to produce L-citrulline. This chain is Ornithine carbamoyltransferase, catabolic, found in Streptococcus pneumoniae serotype 4 (strain ATCC BAA-334 / TIGR4).